The primary structure comprises 142 residues: uncharacterized protein (142 aa).

This is an uncharacterized protein from Homo sapiens (Human).